The following is a 313-amino-acid chain: Cytosolic Fe-S cluster assembly factor NUBP1 homolog (313 aa).

Residues 1–25 (MSDVPDDANAGCPGTGSAGAGKASG) are disordered. 4 residues coordinate [4Fe-4S] cluster: C12, C26, C29, and C35. 66–73 (GKGGVGKS) provides a ligand contact to ATP. The [4Fe-4S] cluster site is built by C240 and C243.

Belongs to the Mrp/NBP35 ATP-binding proteins family. NUBP1/NBP35 subfamily. In terms of assembly, heterotetramer of 2 NUBP1 and 2 NUBP2 chains. Requires [4Fe-4S] cluster as cofactor. Expressed in head amphid and labial ciliated sensory neurons and tail phasmid ciliated chemosensory neurons.

The protein resides in the cytoplasm. Its subcellular location is the cell projection. Functionally, component of the cytosolic iron-sulfur (Fe/S) protein assembly (CIA) machinery. Required for maturation of extramitochondrial Fe-S proteins. The NUBP1-NUBP2 heterotetramer forms a Fe-S scaffold complex, mediating the de novo assembly of an Fe-S cluster and its transfer to target apoproteins. Regulates cilium formation and structure. The chain is Cytosolic Fe-S cluster assembly factor NUBP1 homolog from Caenorhabditis elegans.